Here is an 814-residue protein sequence, read N- to C-terminus: Immunoglobulin superfamily DCC subclass member 3 (814 aa).

A signal peptide spans 1-35; the sequence is MAVQRAASPRRPPAPLWPRLLLPLLLLLLPAPSEG. Ig-like C2-type domains are found at residues 36-139, 140-220, 238-321, and 329-416; these read LGHS…ATMS, DFHV…IRIS, PAIL…RTAQ, and PAEF…ARLT. 2 disulfides stabilise this stretch: Cys-63–Cys-117 and Cys-160–Cys-209. Residue Asn-93 is glycosylated (N-linked (GlcNAc...) asparagine). Residue Asn-246 is glycosylated (N-linked (GlcNAc...) asparagine). Intrachain disulfides connect Cys-259–Cys-307 and Cys-351–Cys-400. Asn-381 and Asn-382 each carry an N-linked (GlcNAc...) asparagine glycan. Fibronectin type-III domains are found at residues 426-520 and 523-618; these read PPRN…TLGE and APPP…ASER. Residues Asn-580, Asn-604, and Asn-634 are each glycosylated (N-linked (GlcNAc...) asparagine). The helical transmembrane segment at 641-661 threads the bilayer; it reads IVIGIHIGVTCIIFCVLFLLF. 2 disordered regions span residues 722–743 and 762–814; these read PPAS…APAP and GKTT…HSEQ. Low complexity predominate over residues 770–781; it reads TEATAPCAGLAA.

It belongs to the immunoglobulin superfamily. DCC family.

It localises to the membrane. The sequence is that of Immunoglobulin superfamily DCC subclass member 3 (IGDCC3) from Homo sapiens (Human).